A 296-amino-acid polypeptide reads, in one-letter code: NADH-ubiquinone oxidoreductase chain 2 (296 aa).

The next 8 helical transmembrane spans lie at 5–25 (LCLFFSYILMVSSHSWLGLWL), 49–69 (YFLIQSVASVIFLASILNQSF), 71–91 (FLIPFALLIKIGAAPFHMWLV), 114–134 (LLGLAMLQFTNSFFIFISAFI), 167–187 (FFLMLVYYVTYLAILYFAVIL), 209–229 (ASISFNLLSLAGLPPFLGFFI), 242–262 (LLVLALVVSSCFSVYFYFSIA), and 276–296 (KMEIPGILSMGFNIFLPLFFL).

The protein belongs to the complex I subunit 2 family.

It localises to the mitochondrion inner membrane. It catalyses the reaction a ubiquinone + NADH + 5 H(+)(in) = a ubiquinol + NAD(+) + 4 H(+)(out). Its function is as follows. Core subunit of the mitochondrial membrane respiratory chain NADH dehydrogenase (Complex I) that is believed to belong to the minimal assembly required for catalysis. Complex I functions in the transfer of electrons from NADH to the respiratory chain. The immediate electron acceptor for the enzyme is believed to be ubiquinone. The polypeptide is NADH-ubiquinone oxidoreductase chain 2 (ND2) (Artemia franciscana (Brine shrimp)).